Consider the following 491-residue polypeptide: Cobyric acid synthase (491 aa).

The 177-residue stretch at 253–429 (AHRVAVVRLP…WHGSLEGDAL (177 aa)) folds into the GATase cobBQ-type domain. Cysteine 334 (nucleophile) is an active-site residue. Histidine 421 is an active-site residue.

Belongs to the CobB/CobQ family. CobQ subfamily.

The protein operates within cofactor biosynthesis; adenosylcobalamin biosynthesis. In terms of biological role, catalyzes amidations at positions B, D, E, and G on adenosylcobyrinic A,C-diamide. NH(2) groups are provided by glutamine, and one molecule of ATP is hydrogenolyzed for each amidation. The polypeptide is Cobyric acid synthase (Mycobacterium marinum (strain ATCC BAA-535 / M)).